Consider the following 891-residue polypeptide: Shieldin complex subunit 2 (891 aa).

Residues 1 to 61 (MSQGSQVHIF…AGDQEFKNLE (61 aa)) are sufficient for interaction with SHLD3 and MAD2L2. The segment at 1–542 (MSQGSQVHIF…TYVSTKHSYL (542 aa)) is interaction with ASTE1. Disordered regions lie at residues 184–222 (MSTG…KASD), 260–294 (NMEA…NEQS), and 333–357 (NEEN…WSCK). Residues 192 to 222 (PTGHRERQSQESFSDTRCEPQSEGAVRKASD) show a composition bias toward basic and acidic residues. 2 stretches are compositionally biased toward polar residues: residues 260 to 271 (NMEAEPTGSQGV) and 342 to 354 (LCSS…NRSW). The interval 695–866 (KYSGVVLIKA…QQDFSLLDFC (172 aa)) is mediates interaction with SHLD1.

It belongs to the SHLD2 family. As to quaternary structure, component of the shieldin complex, consisting of SHLD1, SHLD2, SHLD3 and MAD2L2/REV7. Within the complex, SHLD2 forms a scaffold which interacts with a SHLD3-MAD2L2 subcomplex via its N-terminus, and with SHLD1 via its C-terminus. Interacts with TP53BP1. Interacts with RIF1. Interacts with ASTE1.

It localises to the chromosome. Functionally, component of the shieldin complex, which plays an important role in repair of DNA double-stranded breaks (DSBs). During G1 and S phase of the cell cycle, the complex functions downstream of TP53BP1 to promote non-homologous end joining (NHEJ) and suppress DNA end resection. Mediates various NHEJ-dependent processes including immunoglobulin class-switch recombination, and fusion of unprotected telomeres. The polypeptide is Shieldin complex subunit 2 (Mus musculus (Mouse)).